The sequence spans 61 residues: MPYVTVKMLEGRTEEQKKALAEKVTAAVSETTGAPEENIVVFIEEMSKNHYAVGGKRLSDK.

Residue Pro-2 is the Proton acceptor; via imino nitrogen of the active site.

The protein belongs to the 4-oxalocrotonate tautomerase family.

This Bacillus anthracis protein is Probable tautomerase BA_5626/GBAA_5626/BAS5226.